Consider the following 245-residue polypeptide: Ribonuclease PH (245 aa).

Residues Arg-93 and 131 to 133 (GTR) contribute to the phosphate site.

This sequence belongs to the RNase PH family. As to quaternary structure, homohexameric ring arranged as a trimer of dimers.

It catalyses the reaction tRNA(n+1) + phosphate = tRNA(n) + a ribonucleoside 5'-diphosphate. Phosphorolytic 3'-5' exoribonuclease that plays an important role in tRNA 3'-end maturation. Removes nucleotide residues following the 3'-CCA terminus of tRNAs; can also add nucleotides to the ends of RNA molecules by using nucleoside diphosphates as substrates, but this may not be physiologically important. Probably plays a role in initiation of 16S rRNA degradation (leading to ribosome degradation) during starvation. The sequence is that of Ribonuclease PH from Corynebacterium efficiens (strain DSM 44549 / YS-314 / AJ 12310 / JCM 11189 / NBRC 100395).